A 452-amino-acid chain; its full sequence is Nuclear distribution protein PAC1 (452 aa).

A LisH domain is found at 12 to 44 (QKDELHKAILAYFSASGLSNTGAALREELGVGD). Positions 64-91 (TGVLRLQKKIMELESRLSSLQSELDSAT) form a coiled coil. 8 WD repeats span residues 117 to 158 (SHRN…RTVK), 160 to 200 (HTKA…KNIR), 204 to 245 (GHDH…CVKT), 248 to 287 (GHSD…HKAT), 290 to 350 (GHEH…LKTL), 352 to 391 (GHDN…RCVK), 396 to 435 (AHSH…INVR), and 437 to 452 (VIAT…VFAS).

It belongs to the WD repeat LIS1/nudF family. As to quaternary structure, self-associates. Interacts with NDL1 and dynein.

It localises to the cytoplasm. The protein resides in the cytoskeleton. The protein localises to the spindle pole. Its function is as follows. Positively regulates the activity of the minus-end directed microtubule motor protein dynein. May enhance dynein-mediated microtubule sliding by targeting dynein to the microtubule plus end. Required for nuclear migration during vegetative growth as well as development. Required for retrograde early endosome (EE) transport from the hyphal tip. Required for localization of dynein to the mitotic spindle poles. Recruits additional proteins to the dynein complex at SPBs. This is Nuclear distribution protein PAC1 from Tuber melanosporum (strain Mel28) (Perigord black truffle).